The following is a 246-amino-acid chain: 2-aminoethylphosphonate cytidylyltransferase (246 aa).

Positions 19, 20, 34, 97, 114, and 115 each coordinate CMP-(2-aminoethyl)phosphonate. Mg(2+) contacts are provided by D116 and D145. Positions 145, 161, and 202 each coordinate CMP-(2-aminoethyl)phosphonate. Positions 226 and 228 each coordinate Mg(2+).

The protein belongs to the LicC/PntC cytidylyltransferase family. In terms of assembly, monomer. Mg(2+) serves as cofactor.

The enzyme catalyses (2-aminoethyl)phosphonate + CTP = CMP-(2-aminoethyl)phosphonate + diphosphate. The protein operates within phosphorus metabolism; phosphonate biosynthesis. Functionally, cytidylyltransferase involved in the biosynthesis of cell-surface phosphonates. Catalyzes the activation of 2-aminoethylphosphonate (AEP) to CMP-2-aminoethylphosphonate (CMP-AEP). Can also use phosphocholine, with much lower efficiency. Exhibits strong activity towards CTP, limited activity towards ATP and no activity with GTP. This is 2-aminoethylphosphonate cytidylyltransferase from Lancefieldella rimae (strain ATCC 49626 / DSM 7090 / CCUG 31168 / NBRC 15546 / VPI D140H-11A) (Atopobium rimae).